The primary structure comprises 440 residues: GTPase Der (440 aa).

EngA-type G domains follow at residues 4–168 (PIVA…PENK) and 177–352 (IKVA…NQRA). Residues 10-17 (GRPNVGKS), 57-61 (DTGGI), 120-123 (NKVD), 183-190 (GKPNVGKS), 230-234 (DTAGL), and 295-298 (NKWD) each bind GTP. Positions 353-437 (MRVPTGGLNE…PIRFIYREKS (85 aa)) constitute a KH-like domain.

This sequence belongs to the TRAFAC class TrmE-Era-EngA-EngB-Septin-like GTPase superfamily. EngA (Der) GTPase family. As to quaternary structure, associates with the 50S ribosomal subunit.

Its function is as follows. GTPase that plays an essential role in the late steps of ribosome biogenesis. This Alkaliphilus metalliredigens (strain QYMF) protein is GTPase Der.